The sequence spans 806 residues: Ent-atiserene synthase KSL4, chloroplastic (806 aa).

A chloroplast-targeting transit peptide spans 1–75 (MGIVALILIK…AKLFKKNEVC (75 aa)). The tract at residues 33 to 56 (ASLAGSGLPKTTPPKTASLQSHSP) is disordered. Positions 45–55 (PPKTASLQSHS) are enriched in polar residues. Residues aspartate 556, aspartate 560, asparagine 700, and glutamate 708 each coordinate Mg(2+). Positions 556–560 (DDLFD) match the DDXXD motif motif.

The protein belongs to the terpene synthase family. The cofactor is Mg(2+). Highly expressed in leaves, and, at low levels, in roots, stems and flowers.

It is found in the plastid. Its subcellular location is the chloroplast. It catalyses the reaction ent-copalyl diphosphate = ent-atiserene + diphosphate. Its pathway is secondary metabolite biosynthesis; terpenoid biosynthesis. Involved in the biosynthesis of ent-kaurene diterpenoids natural products such as oridonin, miltiradiene, eriocalyxin B and nezukol, known to exhibit antitumor, anti-inflammatory and antibacterial activities. Catalyzes the conversion of ent-copalyl diphosphate (ent-CPP) to ent-atiserene. This Isodon rubescens (Rabdosia rubescens) protein is Ent-atiserene synthase KSL4, chloroplastic.